The chain runs to 470 residues: Nitric oxide synthase, inducible (470 aa).

L-arginine-binding residues include Trp-2, Tyr-3, and Glu-7. Arg-11, Trp-93, and Phe-106 together coordinate (6R)-L-erythro-5,6,7,8-tetrahydrobiopterin. Position 121 (Tyr-121) interacts with heme b. The segment at 145–165 (FKAVARAALFSSTLMSRVLAN) is calmodulin-binding. The region spanning 169 to 307 (CTVLYATETG…AFSAWALTAL (139 aa)) is the Flavodoxin-like domain. 11 residues coordinate FMN: Thr-175, Glu-176, Thr-177, Lys-179, Ser-180, Ser-221, Thr-222, Ser-258, Cys-265, Glu-291, and Gln-295. Arg-380 is a binding site for NADP(+). His-403 provides a ligand contact to FAD. Thr-440 contacts NADP(+).

The protein belongs to the NOS family. Homodimer. Heme b serves as cofactor. Requires FAD as cofactor. FMN is required as a cofactor. It depends on (6R)-L-erythro-5,6,7,8-tetrahydrobiopterin as a cofactor.

It localises to the cytoplasm. The protein localises to the cytosol. It catalyses the reaction 2 L-arginine + 3 NADPH + 4 O2 + H(+) = 2 L-citrulline + 2 nitric oxide + 3 NADP(+) + 4 H2O. Not stimulated by calcium/calmodulin. Its function is as follows. Produces nitric oxide (NO) which is a messenger molecule with diverse functions throughout the body. In macrophages, NO mediates tumoricidal and bactericidal actions. Also has nitrosylase activity and mediates cysteine S-nitrosylation of cytoplasmic target proteins such COX2. This Oncorhynchus mykiss (Rainbow trout) protein is Nitric oxide synthase, inducible (nos2).